A 106-amino-acid polypeptide reads, in one-letter code: MTLEKHAFKMQLNPGMEAEYRKRHDEIWPELVDLLHQSGASDYSIHLDRETNTLFGVLTRPKDHTMASLPDHPVMKKWWAHMADIMATNPDNSPVQSDLVTLFHMP.

Tyrosine 20 serves as a coordination point for substrate. The Proton donor role is filled by histidine 24. Substrate contacts are provided by residues tyrosine 43 and tryptophan 78–tryptophan 79.

It belongs to the rhamnose mutarotase family. As to quaternary structure, homodimer.

It localises to the cytoplasm. The enzyme catalyses alpha-L-rhamnose = beta-L-rhamnose. The protein operates within carbohydrate degradation; L-rhamnose degradation. In terms of biological role, involved in the anomeric conversion of L-rhamnose. The chain is L-rhamnose mutarotase (rhaM) from Rhizobium leguminosarum bv. trifolii.